Here is a 551-residue protein sequence, read N- to C-terminus: Cleavage and polyadenylation specificity factor subunit 6 (551 aa).

The tract at residues 1-213 (MADGVDHIDI…RGRFPGAVPG (213 aa)) is necessary for interaction with NXF1. Residues 81 to 161 (IALYIGNLTW…QSPVVTPCNK (81 aa)) enclose the RRM domain. Residues 81–161 (IALYIGNLTW…QSPVVTPCNK (81 aa)) are necessary for interaction with NUDT21/CPSF5. Positions 81–161 (IALYIGNLTW…QSPVVTPCNK (81 aa)) are necessary for nuclear paraspeckles localization. A Phosphothreonine modification is found at threonine 157. The span at 169-180 (MQSRKTTQSGQM) shows a compositional bias: polar residues. Disordered regions lie at residues 169 to 411 (MQSR…PLSE) and 477 to 551 (LHGI…YRHR). Over residues 184-193 (GKAGPPGGGS) the composition is skewed to gly residues. A GAR motif is present at residues 202-206 (RGRGR). Residues 207–219 (FPGAVPGGDRFPG) are compositionally biased toward low complexity. Pro residues-rich tracts occupy residues 220-265 (PAGP…PLAG), 285-366 (GQPP…PPPT), and 377-388 (GPPPTDPYGRPP). A compositionally biased stretch (basic and acidic residues) spans 389 to 404 (PYDRGDYGPPGREMDT). Phosphothreonine occurs at positions 404 and 407. Positions 404–551 (TARTPLSEAE…RDREREYRHR (148 aa)) are sufficient for nuclear speckle localization. The necessary for RNA-binding stretch occupies residues 405–551 (ARTPLSEAEF…RDREREYRHR (147 aa)). Residues 481–551 (ESKSYGSGSR…RDREREYRHR (71 aa)) are necessary for interaction with SRSF3, SRSF7 and TRA2B/SFRS10. Residues 489 to 503 (SRRERSRERDHSRSR) show a composition bias toward basic and acidic residues. An arg/Ser-rich domain region spans residues 490-551 (RRERSRERDH…RDREREYRHR (62 aa)). Phosphoserine occurs at positions 494, 500, 511, 513, and 525. Residues 504-514 (EKSRRHKSRSR) are compositionally biased toward basic residues. Residues 510–551 (KSRSRDRHDDYYRERSRERERHRDRDRDRDRERDREREYRHR) form a sufficient for nuclear targeting region. Residues 515-551 (DRHDDYYRERSRERERHRDRDRDRDRERDREREYRHR) show a composition bias toward basic and acidic residues.

Belongs to the RRM CPSF6/7 family. In terms of assembly, component of the cleavage factor Im (CFIm) complex which is a heterotetramer composed of two subunits of NUDT21/CPSF5 and two subunits of CPSF6 or CPSF7 or a heterodimer of CPSF6 and CPSF7. The cleavage factor Im (CFIm) complex associates with the CPSF and CSTF complexes to promote the assembly of the core mRNA 3'-processing machinery. Associates with the exon junction complex (EJC). Associates with the 80S ribosome particle. Interacts (via the RRM domain) with NUDT21/CPSF5; this interaction is direct and enhances binding to RNA. Interacts (via Arg/Ser-rich domain) with FIP1L1 (preferentially via unphosphorylated form and Arg/Glu/Asp-rich domain); this interaction mediates, at least in part, the interaction between the CFIm and CPSF complexes and may be inhibited by CPSF6 hyper-phosphorylation. Interacts (via N-terminus) with NXF1; this interaction is direct. Interacts with SRSF3. Interacts with SRSF7. Interacts with SNRNP70. Interacts with TRA2B/SFRS10. Interacts with UPF1. Interacts with UPF3B. Interacts with VIRMA. Interacts (via Arg/Ser-rich domain) with TNPO3; promoting nuclear import of CPSF6 independently of its phosphorylation status. Interacts with YTHDC1. Phosphorylated. Phosphorylated in the Arg/Ser-rich domain by SRPK1, in vitro. In terms of processing, symmetrically dimethylated on arginine residues by PRMT5 in a WDR77- and CLNS1A-dependent manner. Asymmetrically dimethylated on arginine residues by PRMT1. Post-translationally, symmetrically dimethylated on arginine residues in the GAR motif by PRMT5 in a WDR77- and CLNS1A-dependent manner. Asymmetrically dimethylated on arginine residues in the GAR motif by PRMT1. Expressed in testis. Expressed in male germ cells (at protein level).

The protein resides in the nucleus. It is found in the nucleoplasm. Its subcellular location is the nucleus speckle. It localises to the cytoplasm. Functionally, component of the cleavage factor Im (CFIm) complex that functions as an activator of the pre-mRNA 3'-end cleavage and polyadenylation processing required for the maturation of pre-mRNA into functional mRNAs. CFIm contributes to the recruitment of multiprotein complexes on specific sequences on the pre-mRNA 3'-end, so called cleavage and polyadenylation signals (pA signals). Most pre-mRNAs contain multiple pA signals, resulting in alternative cleavage and polyadenylation (APA) producing mRNAs with variable 3'-end formation. The CFIm complex acts as a key regulator of cleavage and polyadenylation site choice during APA through its binding to 5'-UGUA-3' elements localized in the 3'-untranslated region (UTR) for a huge number of pre-mRNAs. CPSF6 enhances NUDT21/CPSF5 binding to 5'-UGUA-3' elements localized upstream of pA signals and promotes RNA looping, and hence activates directly the mRNA 3'-processing machinery. Plays a role in mRNA export. In Mus musculus (Mouse), this protein is Cleavage and polyadenylation specificity factor subunit 6.